The chain runs to 205 residues: Potassium-transporting ATPase KdpC subunit (205 aa).

The helical transmembrane segment at 9–29 threads the bilayer; that stretch reads VFAVLFLFILGFVYPTVTSLI.

The protein belongs to the KdpC family. In terms of assembly, the system is composed of three essential subunits: KdpA, KdpB and KdpC.

Its subcellular location is the cell membrane. Part of the high-affinity ATP-driven potassium transport (or Kdp) system, which catalyzes the hydrolysis of ATP coupled with the electrogenic transport of potassium into the cytoplasm. This subunit acts as a catalytic chaperone that increases the ATP-binding affinity of the ATP-hydrolyzing subunit KdpB by the formation of a transient KdpB/KdpC/ATP ternary complex. In Thermoplasma acidophilum (strain ATCC 25905 / DSM 1728 / JCM 9062 / NBRC 15155 / AMRC-C165), this protein is Potassium-transporting ATPase KdpC subunit.